We begin with the raw amino-acid sequence, 554 residues long: MSLLEAFAEILEPADVHVAQRLTVLADEPDASVELAVALAVRALRGGSVCVDLRSVAGQVELPDLPWPDPDAWLAALAASPLLGQPPVLRLFGDLLYLDRYWLEEQQVCDDVLALVSARPGGAVPDVSRLFGAGFEEQRAAAKVALSQGLTVLTGGPGTGKTTTVARLLALLAEQAALAGKPSPRIALAAPTGKAAARLQEAVQLEIDQLDLIERRRLTGLHATTLHRLLGPRPDTSSRFRHHRANRLPHDVIVVDETSMVSLTMMARLLEAVRPQTRLVLVGDPDQLASVEAGAVLADLVEGLGSRGVAELKTSHRFGESIGALASAIRTGDADAALAVLAAGGEHIEWVHEDPVEQLREVVVPHAMRLRQAAILGDQREALATLDEHRLLCAHRRGPAGVDHWNRQVQRWLGEETGEPLWGSWYVGRPILVTANDYGLKLYNGDTGVVVATPDGMRAVIGDAGTFATGRLTDVETMHAMTIHKSQGSQADEVTVLLPSEDSRLLTRELFYTAVTRAKTRVRVVGAEAEVRAAIERQAVRATGLRKRLRPAGV.

155–162 provides a ligand contact to ATP; the sequence is GGPGTGKT.

This sequence belongs to the RecD family. Heterotrimer of RecB, RecC and RecD. All subunits contribute to DNA-binding.

It carries out the reaction Couples ATP hydrolysis with the unwinding of duplex DNA at the replication fork by translocating in the 5'-3' direction. This creates two antiparallel DNA single strands (ssDNA). The leading ssDNA polymer is the template for DNA polymerase III holoenzyme which synthesizes a continuous strand.. It catalyses the reaction ATP + H2O = ADP + phosphate + H(+). In terms of biological role, a helicase/nuclease that prepares dsDNA breaks (DSB) for recombinational DNA repair. Binds to DSBs and unwinds DNA via a highly rapid and processive ATP-dependent bidirectional helicase activity. Holoenzyme degrades any linearized DNA that is unable to undergo homologous recombination. In the holoenzyme this subunit has ssDNA-dependent ATPase and 5'-3' helicase activity. When added to pre-assembled RecBC greatly stimulates nuclease activity and augments holoenzyme processivity. Unlike the case in E.coli, suppresses RecA-dependent homologous recombination, is instead required for single-strand annealing pathway repair of DSB. This Mycolicibacterium smegmatis (strain ATCC 700084 / mc(2)155) (Mycobacterium smegmatis) protein is RecBCD enzyme subunit RecD.